Here is a 309-residue protein sequence, read N- to C-terminus: Lipoyl synthase (309 aa).

Residues cysteine 43, cysteine 48, cysteine 54, cysteine 70, cysteine 74, cysteine 77, and serine 283 each contribute to the [4Fe-4S] cluster site. One can recognise a Radical SAM core domain in the interval 56–272 (AVRKTATFMI…KEIAMQKGFS (217 aa)).

It belongs to the radical SAM superfamily. Lipoyl synthase family. The cofactor is [4Fe-4S] cluster.

It is found in the cytoplasm. The catalysed reaction is [[Fe-S] cluster scaffold protein carrying a second [4Fe-4S](2+) cluster] + N(6)-octanoyl-L-lysyl-[protein] + 2 oxidized [2Fe-2S]-[ferredoxin] + 2 S-adenosyl-L-methionine + 4 H(+) = [[Fe-S] cluster scaffold protein] + N(6)-[(R)-dihydrolipoyl]-L-lysyl-[protein] + 4 Fe(3+) + 2 hydrogen sulfide + 2 5'-deoxyadenosine + 2 L-methionine + 2 reduced [2Fe-2S]-[ferredoxin]. It participates in protein modification; protein lipoylation via endogenous pathway; protein N(6)-(lipoyl)lysine from octanoyl-[acyl-carrier-protein]. Catalyzes the radical-mediated insertion of two sulfur atoms into the C-6 and C-8 positions of the octanoyl moiety bound to the lipoyl domains of lipoate-dependent enzymes, thereby converting the octanoylated domains into lipoylated derivatives. This Shouchella clausii (strain KSM-K16) (Alkalihalobacillus clausii) protein is Lipoyl synthase.